A 283-amino-acid chain; its full sequence is Probable endonuclease 4 (283 aa).

Residues H69, H113, E148, D182, H185, H217, D230, H232, and E262 each coordinate Zn(2+).

Belongs to the AP endonuclease 2 family. Zn(2+) serves as cofactor.

The catalysed reaction is Endonucleolytic cleavage to 5'-phosphooligonucleotide end-products.. Its function is as follows. Endonuclease IV plays a role in DNA repair. It cleaves phosphodiester bonds at apurinic or apyrimidinic (AP) sites, generating a 3'-hydroxyl group and a 5'-terminal sugar phosphate. The chain is Probable endonuclease 4 from Bifidobacterium longum (strain NCC 2705).